A 160-amino-acid polypeptide reads, in one-letter code: Transcription antitermination protein NusB (160 aa).

Belongs to the NusB family.

In terms of biological role, involved in transcription antitermination. Required for transcription of ribosomal RNA (rRNA) genes. Binds specifically to the boxA antiterminator sequence of the ribosomal RNA (rrn) operons. The chain is Transcription antitermination protein NusB from Nitrobacter hamburgensis (strain DSM 10229 / NCIMB 13809 / X14).